A 543-amino-acid chain; its full sequence is CTP synthase (543 aa).

The segment at 1-266 is amidoligase domain; sequence MKTNYIFVTG…DDYICERFSL (266 aa). S14 is a binding site for CTP. Residue S14 participates in UTP binding. ATP is bound by residues 15-20 and D72; that span reads SLGKGI. Mg(2+) contacts are provided by D72 and E140. Residues 147–149, 187–192, and K223 each bind CTP; these read DIE and KTKPTQ. UTP contacts are provided by residues 187–192 and K223; that span reads KTKPTQ. Residue 239–241 coordinates ATP; the sequence is KDV. Residues 291–538 enclose the Glutamine amidotransferase type-1 domain; the sequence is TVGIVGKYID…IKAASEYQKK (248 aa). G352 contributes to the L-glutamine binding site. The active-site Nucleophile; for glutamine hydrolysis is the C379. L-glutamine is bound by residues 380–383, E403, and R466; that span reads LGMQ. Active-site residues include H511 and E513.

It belongs to the CTP synthase family. As to quaternary structure, homotetramer.

It carries out the reaction UTP + L-glutamine + ATP + H2O = CTP + L-glutamate + ADP + phosphate + 2 H(+). It catalyses the reaction L-glutamine + H2O = L-glutamate + NH4(+). The enzyme catalyses UTP + NH4(+) + ATP = CTP + ADP + phosphate + 2 H(+). It functions in the pathway pyrimidine metabolism; CTP biosynthesis via de novo pathway; CTP from UDP: step 2/2. Its activity is regulated as follows. Allosterically activated by GTP, when glutamine is the substrate; GTP has no effect on the reaction when ammonia is the substrate. The allosteric effector GTP functions by stabilizing the protein conformation that binds the tetrahedral intermediate(s) formed during glutamine hydrolysis. Inhibited by the product CTP, via allosteric rather than competitive inhibition. Its function is as follows. Catalyzes the ATP-dependent amination of UTP to CTP with either L-glutamine or ammonia as the source of nitrogen. Regulates intracellular CTP levels through interactions with the four ribonucleotide triphosphates. This Baumannia cicadellinicola subsp. Homalodisca coagulata protein is CTP synthase.